The following is a 201-amino-acid chain: Protease (201 aa).

Residues His55, Asp72, and Cys122 contribute to the active site.

The protein belongs to the peptidase C5 family. In terms of assembly, interacts with protease cofactor pVI-C; this interaction is necessary for protease activation.

The protein resides in the virion. Its subcellular location is the host nucleus. It catalyses the reaction Cleaves proteins of the adenovirus and its host cell at two consensus sites: -Yaa-Xaa-Gly-Gly-|-Xaa- and -Yaa-Xaa-Gly-Xaa-|-Gly- (in which Yaa is Met, Ile or Leu, and Xaa is any amino acid).. Its activity is regulated as follows. Requires DNA and protease cofactor for maximal activation. Inside nascent virions, becomes partially activated by binding to the viral DNA, allowing it to cleave the cofactor that binds to the protease and fully activates it. Actin, like the viral protease cofactor, seems to act as a cofactor in the cleavage of cytokeratin 18 and of actin itself. Its function is as follows. Cleaves viral precursor proteins (pTP, pIIIa, pVI, pVII, pVIII, and pX) inside newly assembled particles giving rise to mature virions. Protease complexed to its cofactor slides along the viral DNA to specifically locate and cleave the viral precursors. Mature virions have a weakened organization compared to the unmature virions, thereby facilitating subsequent uncoating. Without maturation, the particle lacks infectivity and is unable to uncoat. Late in adenovirus infection, in the cytoplasm, may participate in the cytoskeleton destruction. Cleaves host cell cytoskeletal keratins K7 and K18. The sequence is that of Protease from Pantherophis guttatus (Corn snake).